The chain runs to 591 residues: Oligopeptide-binding protein OppA (591 aa).

Belongs to the bacterial solute-binding protein 5 family. As to quaternary structure, the complex is composed of an ATP-binding protein (OppD), two transmembrane proteins (OppB and OppC) and a solute-binding protein (OppA).

It is found in the periplasm. Its function is as follows. Part of the ABC transporter complex OppABCD involved in the uptake of oligopeptides. Peptide-binding protein that shows broad specificity but a moderate preference for hydrophobic oligopeptides and those that are 6-16 amino acids long. This Mycobacterium bovis (strain ATCC BAA-935 / AF2122/97) protein is Oligopeptide-binding protein OppA.